The sequence spans 354 residues: Uroporphyrinogen decarboxylase (354 aa).

Substrate is bound by residues Arg-27–Arg-31, Asp-77, Tyr-154, Thr-209, and His-327.

The protein belongs to the uroporphyrinogen decarboxylase family. Homodimer.

The protein resides in the cytoplasm. The catalysed reaction is uroporphyrinogen III + 4 H(+) = coproporphyrinogen III + 4 CO2. It functions in the pathway porphyrin-containing compound metabolism; protoporphyrin-IX biosynthesis; coproporphyrinogen-III from 5-aminolevulinate: step 4/4. Functionally, catalyzes the decarboxylation of four acetate groups of uroporphyrinogen-III to yield coproporphyrinogen-III. In Salmonella arizonae (strain ATCC BAA-731 / CDC346-86 / RSK2980), this protein is Uroporphyrinogen decarboxylase.